Reading from the N-terminus, the 353-residue chain is E3 ubiquitin-protein ligase TRIM63 (353 aa).

The RING-type zinc-finger motif lies at 23–79 (CPICLEMFTKPVVILPCQHNLCRKCANDIFQAANPYWTSRGSSVSMSGGRFRCPTCR). The tract at residues 74–218 (RCPTCRHEVI…LSQKFDTLYA (145 aa)) is interaction with TTN. A B box-type zinc finger spans residues 117-159 (GSHPMCKEHEDEKINIYCLTCEVPTCSMCKVFGIHKACEVAPL). Residues C122, H125, C145, and H151 each contribute to the Zn(2+) site. A coiled-coil region spans residues 207–269 (EELSQKFDTL…VETAIQSLDE (63 aa)). Residues 267–325 (LDEPGGATFLLTAKQLIKSIVEASKGCQLGKTEQGFENMDFFTLDLEHIADALRAIDFG) enclose the COS domain. A compositionally biased stretch (acidic residues) spans 326-344 (TDEEEEEFIEEEDQEEEES). The interval 326 to 353 (TDEEEEEFIEEEDQEEEESTEGKEEGHQ) is disordered.

As to quaternary structure, homodimer. Homooligomer and heterooligomer. Interacts with SUMO2, titin/TTN and GMEB1. Interacts with TRIM54 and probably with TRIM55 and TNNI3. Forms a ternary complex with RACK1 and PRKCE. Interacts with CKM. As to expression, muscle specific. Selectively expressed in heart and skeletal muscle. Also expressed in the iris.

Its subcellular location is the cytoplasm. It is found in the nucleus. It localises to the myofibril. The protein localises to the sarcomere. The protein resides in the m line. Its subcellular location is the z line. It catalyses the reaction S-ubiquitinyl-[E2 ubiquitin-conjugating enzyme]-L-cysteine + [acceptor protein]-L-lysine = [E2 ubiquitin-conjugating enzyme]-L-cysteine + N(6)-ubiquitinyl-[acceptor protein]-L-lysine.. The protein operates within protein modification; protein ubiquitination. E3 ubiquitin ligase. Mediates the ubiquitination and subsequent proteasomal degradation of CKM, GMEB1 and HIBADH. Regulates the proteasomal degradation of muscle proteins under amino acid starvation, where muscle protein is catabolized to provide other organs with amino acids. Inhibits de novo skeletal muscle protein synthesis under amino acid starvation. Regulates proteasomal degradation of cardiac troponin I/TNNI3 and probably of other sarcomeric-associated proteins. May play a role in striated muscle atrophy and hypertrophy by regulating an anti-hypertrophic PKC-mediated signaling pathway. May regulate the organization of myofibrils through TTN in muscle cells. The chain is E3 ubiquitin-protein ligase TRIM63 (TRIM63) from Homo sapiens (Human).